Here is a 49-residue protein sequence, read N- to C-terminus: MAVKKAALACTVCGSRNYSIAASKNRTQRLELKKFCKHCGKQTLHKETR.

Belongs to the bacterial ribosomal protein bL33 family.

This is Large ribosomal subunit protein bL33A from Lactobacillus johnsonii (strain CNCM I-12250 / La1 / NCC 533).